Reading from the N-terminus, the 504-residue chain is Galactokinase (504 aa).

Residues arginine 47, aspartate 53, histidine 54, and aspartate 56 each contribute to the alpha-D-galactose site. ATP contacts are provided by glycine 150, glycine 152, serine 154, and serine 155. Asparagine 196 and aspartate 200 together coordinate alpha-D-galactose. Aspartate 200 functions as the Proton acceptor in the catalytic mechanism. Residues serine 244, asparagine 245, and lysine 246 each contribute to the ATP site. Tyrosine 254 contacts alpha-D-galactose.

The protein belongs to the GHMP kinase family. GalK subfamily.

The catalysed reaction is alpha-D-galactose + ATP = alpha-D-galactose 1-phosphate + ADP + H(+). Its pathway is carbohydrate metabolism; galactose metabolism. Its function is as follows. Galactokinase is a key enzyme in the galactose metabolism where it catalyzes the conversion of alpha-D-galactose to galactose 1-phosphate. Can also induce the transcription of the gal genes in response to the organism being challenged with galactose as the sole source of carbon. The polypeptide is Galactokinase (Candida parapsilosis (Yeast)).